Reading from the N-terminus, the 301-residue chain is Enolase-phosphatase E1 (301 aa).

Mg(2+) contacts are provided by Asp22 and Glu24. Residues 163–164 and Lys197 contribute to the substrate site; that span reads SS. Asp222 lines the Mg(2+) pocket. Positions 273–301 are disordered; it reads AQAGDTEAKRSASGDGALAAKKAPPTHDF.

The protein belongs to the HAD-like hydrolase superfamily. MasA/MtnC family. Monomer. The cofactor is Mg(2+).

The protein localises to the cytoplasm. It is found in the nucleus. It catalyses the reaction 5-methylsulfanyl-2,3-dioxopentyl phosphate + H2O = 1,2-dihydroxy-5-(methylsulfanyl)pent-1-en-3-one + phosphate. It functions in the pathway amino-acid biosynthesis; L-methionine biosynthesis via salvage pathway; L-methionine from S-methyl-5-thio-alpha-D-ribose 1-phosphate: step 3/6. Its pathway is amino-acid biosynthesis; L-methionine biosynthesis via salvage pathway; L-methionine from S-methyl-5-thio-alpha-D-ribose 1-phosphate: step 4/6. In terms of biological role, bifunctional enzyme that catalyzes the enolization of 2,3-diketo-5-methylthiopentyl-1-phosphate (DK-MTP-1-P) into the intermediate 2-hydroxy-3-keto-5-methylthiopentenyl-1-phosphate (HK-MTPenyl-1-P), which is then dephosphorylated to form the acireductone 1,2-dihydroxy-3-keto-5-methylthiopentene (DHK-MTPene). The chain is Enolase-phosphatase E1 from Monosiga brevicollis (Choanoflagellate).